The chain runs to 276 residues: Diaminopimelate epimerase (276 aa).

Residues Asn-13, Gln-46, and Asn-66 each coordinate substrate. Cys-75 (proton donor) is an active-site residue. Substrate is bound by residues 76 to 77, Asn-159, Asn-192, and 210 to 211; these read GN and ER. Cys-219 functions as the Proton acceptor in the catalytic mechanism. Residue 220-221 participates in substrate binding; sequence GT.

Belongs to the diaminopimelate epimerase family. In terms of assembly, homodimer.

It localises to the cytoplasm. It carries out the reaction (2S,6S)-2,6-diaminopimelate = meso-2,6-diaminopimelate. The protein operates within amino-acid biosynthesis; L-lysine biosynthesis via DAP pathway; DL-2,6-diaminopimelate from LL-2,6-diaminopimelate: step 1/1. Catalyzes the stereoinversion of LL-2,6-diaminopimelate (L,L-DAP) to meso-diaminopimelate (meso-DAP), a precursor of L-lysine and an essential component of the bacterial peptidoglycan. The protein is Diaminopimelate epimerase of Pseudomonas syringae pv. tomato (strain ATCC BAA-871 / DC3000).